Consider the following 179-residue polypeptide: Bifunctional protein PyrR (179 aa).

The PRPP-binding signature appears at 100-112 (VILIDDVLFTGRT).

Belongs to the purine/pyrimidine phosphoribosyltransferase family. PyrR subfamily.

The enzyme catalyses UMP + diphosphate = 5-phospho-alpha-D-ribose 1-diphosphate + uracil. Its function is as follows. Regulates the transcription of the pyrimidine nucleotide (pyr) operon in response to exogenous pyrimidines. Also displays a weak uracil phosphoribosyltransferase activity which is not physiologically significant. This Mannheimia succiniciproducens (strain KCTC 0769BP / MBEL55E) protein is Bifunctional protein PyrR.